Here is a 506-residue protein sequence, read N- to C-terminus: 5-OH-xanthotoxin synthase (506 aa).

The helical transmembrane segment at 3–23 (PVVIFLVLAFPIASVYLLFYH) threads the bilayer. Positions 365–370 (TGPLLI) are substrate specificity. Cys446 is a heme binding site.

It belongs to the cytochrome P450 family. Heme serves as cofactor.

The protein localises to the microsome membrane. It catalyses the reaction xanthotoxin + reduced [NADPH--hemoprotein reductase] + O2 = 5-hydroxyxanthotoxin + oxidized [NADPH--hemoprotein reductase] + H2O + 2 H(+). It participates in secondary metabolite biosynthesis. Involved in the biosynthesis of coumarins and furanocoumarins (FCs), natural products required for defense responses against attacks by predators with potential medical and agroindustrial usages such as anticoagulant, rodenticide and artificial vanilla substitutes. Catalyzes the conversion of xanthotoxin into 5-hydroxyxanthotoxin. The protein is 5-OH-xanthotoxin synthase of Pastinaca sativa (Wild parsnip).